Here is a 436-residue protein sequence, read N- to C-terminus: Adenosylmethionine-8-amino-7-oxononanoate aminotransferase (436 aa).

Residue W66 participates in substrate binding. Residue 126–127 coordinates pyridoxal 5'-phosphate; that stretch reads GS. A substrate-binding site is contributed by Y159. D256 is a binding site for pyridoxal 5'-phosphate. Substrate-binding residues include K285 and G318. Position 285 is an N6-(pyridoxal phosphate)lysine (K285). Residue 319–320 coordinates pyridoxal 5'-phosphate; it reads PT. A substrate-binding site is contributed by R402.

The protein belongs to the class-III pyridoxal-phosphate-dependent aminotransferase family. BioA subfamily. As to quaternary structure, homodimer. Pyridoxal 5'-phosphate serves as cofactor.

The protein localises to the cytoplasm. It carries out the reaction (8S)-8-amino-7-oxononanoate + S-adenosyl-L-methionine = S-adenosyl-4-methylsulfanyl-2-oxobutanoate + (7R,8S)-7,8-diammoniononanoate. It functions in the pathway cofactor biosynthesis; biotin biosynthesis; 7,8-diaminononanoate from 8-amino-7-oxononanoate (SAM route): step 1/1. Functionally, catalyzes the transfer of the alpha-amino group from S-adenosyl-L-methionine (SAM) to 7-keto-8-aminopelargonic acid (KAPA) to form 7,8-diaminopelargonic acid (DAPA). It is the only aminotransferase known to utilize SAM as an amino donor. The chain is Adenosylmethionine-8-amino-7-oxononanoate aminotransferase from Mycobacterium leprae (strain TN).